The following is a 245-amino-acid chain: MKVSLFSTCLVDVFEKRVGIATVELLEKLGCEVDFPAAQVCCGQPAYNSGYHEETKKAAKNMIKAFEQSEVVVAPSGSCVTMFKHYPDLFKNDAKWQARAQELADKTYEVTQFIVEVLGITNVGAKLDGVATIHPSCHMTRLLGNVTAPAKLLNEVEGLEVVELPKYYNCCGFGGTFAVKMSDVSGEMVDEKVDCIVESGADYLVGGDCSCLMNIDGRLRRRGVDVKAVHIIEILNNQVEAVTTR.

The protein belongs to the LutA/YkgE family.

In terms of biological role, is involved in L-lactate degradation and allows cells to grow with lactate as the sole carbon source. This is Lactate utilization protein A from Macrococcus caseolyticus (strain JCSC5402) (Macrococcoides caseolyticum).